Here is a 216-residue protein sequence, read N- to C-terminus: PRA1 family protein B6 (216 aa).

An N-acetylalanine modification is found at alanine 2. Transmembrane regions (helical) follow at residues 83-103, 105-125, 135-155, 159-179, and 186-206; these read LVAI…FLLA, LAAS…LVIG, LGIL…GSLL, LAVG…EDLF, and IGSG…AAAI.

This sequence belongs to the PRA1 family. As to quaternary structure, interacts with PRA1B1, PRA1B2, PRA1B3, PRA1B4, PRA1B5 and PRA1E. As to expression, expressed in hypocotyls, roots, lateral roots, lateral root caps, columella cells, leaves and stomata.

The protein resides in the endoplasmic reticulum membrane. May be involved in both secretory and endocytic intracellular trafficking in the endosomal/prevacuolar compartments. The chain is PRA1 family protein B6 (PRA1B6) from Arabidopsis thaliana (Mouse-ear cress).